The primary structure comprises 201 residues: LexA repressor (201 aa).

The H-T-H motif DNA-binding region spans 29-49 (VREICKAVGLSSTSSVHFHLK). Residues serine 125 and lysine 162 each act as for autocatalytic cleavage activity in the active site.

The protein belongs to the peptidase S24 family. Homodimer.

The catalysed reaction is Hydrolysis of Ala-|-Gly bond in repressor LexA.. Functionally, represses a number of genes involved in the response to DNA damage (SOS response), including recA and lexA. In the presence of single-stranded DNA, RecA interacts with LexA causing an autocatalytic cleavage which disrupts the DNA-binding part of LexA, leading to derepression of the SOS regulon and eventually DNA repair. The chain is LexA repressor from Clostridium botulinum (strain ATCC 19397 / Type A).